Consider the following 112-residue polypeptide: UPF0102 protein THEYE_A1950 (112 aa).

It belongs to the UPF0102 family.

The sequence is that of UPF0102 protein THEYE_A1950 from Thermodesulfovibrio yellowstonii (strain ATCC 51303 / DSM 11347 / YP87).